Reading from the N-terminus, the 85-residue chain is Large ribosomal subunit protein bL27 (85 aa).

The segment at 1–24 is disordered; the sequence is MAHKKAGGSSRNGRDSNSKRLGVK.

The protein belongs to the bacterial ribosomal protein bL27 family.

In Nitrosospira multiformis (strain ATCC 25196 / NCIMB 11849 / C 71), this protein is Large ribosomal subunit protein bL27.